We begin with the raw amino-acid sequence, 614 residues long: Glucose oxidase 1 (614 aa).

A signal peptide spans 1–15 (MKSIILSCFVISAAA). The FAD site is built by Leu-52, Thr-53, and Glu-73. Asn-112 carries N-linked (GlcNAc...) asparagine glycosylation. The tract at residues 117–136 (IRSGNGLGGSTLTNGGSWTR) is disordered. Positions 126, 130, 131, and 133 each coordinate FAD. Residues Asn-184 and Asn-191 are each glycosylated (N-linked (GlcNAc...) asparagine). Cys-187 and Cys-229 are disulfide-bonded. Val-273 lines the FAD pocket. N-linked (GlcNAc...) asparagine glycosylation is found at Asn-279, Asn-383, and Asn-416. Residue His-544 is the Proton acceptor of the active site. 2 residues coordinate O2: Arg-565 and Val-566. Residues Gly-577 and Met-589 each contribute to the FAD site.

Belongs to the GMC oxidoreductase family. In terms of assembly, homodimer. Requires FAD as cofactor.

Its subcellular location is the secreted. It localises to the cell wall. It is found in the cytoplasm. The protein resides in the extracellular space. The protein localises to the extracellular matrix. The enzyme catalyses beta-D-glucose + O2 = D-glucono-1,5-lactone + H2O2. Glucose oxidase catalyzes the oxidation of beta-D-glucose to D-glucono-delta-lactone and hydrogen peroxide in the presence of molecular oxygen. This chain is Glucose oxidase 1, found in Penicillium expansum (Blue mold rot fungus).